Here is a 272-residue protein sequence, read N- to C-terminus: Tryptophan synthase alpha chain (272 aa).

Catalysis depends on proton acceptor residues glutamate 49 and aspartate 60.

It belongs to the TrpA family. Tetramer of two alpha and two beta chains.

It catalyses the reaction (1S,2R)-1-C-(indol-3-yl)glycerol 3-phosphate + L-serine = D-glyceraldehyde 3-phosphate + L-tryptophan + H2O. It participates in amino-acid biosynthesis; L-tryptophan biosynthesis; L-tryptophan from chorismate: step 5/5. Its function is as follows. The alpha subunit is responsible for the aldol cleavage of indoleglycerol phosphate to indole and glyceraldehyde 3-phosphate. In Acidithiobacillus ferrooxidans (strain ATCC 23270 / DSM 14882 / CIP 104768 / NCIMB 8455) (Ferrobacillus ferrooxidans (strain ATCC 23270)), this protein is Tryptophan synthase alpha chain.